The following is a 290-amino-acid chain: 4-hydroxy-tetrahydrodipicolinate synthase (290 aa).

Thr-44 provides a ligand contact to pyruvate. The active-site Proton donor/acceptor is Tyr-131. Lys-159 functions as the Schiff-base intermediate with substrate in the catalytic mechanism. Ile-201 is a pyruvate binding site.

It belongs to the DapA family. In terms of assembly, homotetramer; dimer of dimers.

It localises to the cytoplasm. It carries out the reaction L-aspartate 4-semialdehyde + pyruvate = (2S,4S)-4-hydroxy-2,3,4,5-tetrahydrodipicolinate + H2O + H(+). It participates in amino-acid biosynthesis; L-lysine biosynthesis via DAP pathway; (S)-tetrahydrodipicolinate from L-aspartate: step 3/4. In terms of biological role, catalyzes the condensation of (S)-aspartate-beta-semialdehyde [(S)-ASA] and pyruvate to 4-hydroxy-tetrahydrodipicolinate (HTPA). This Jannaschia sp. (strain CCS1) protein is 4-hydroxy-tetrahydrodipicolinate synthase.